The chain runs to 828 residues: Periplasmic nitrate reductase (828 aa).

A signal peptide (tat-type signal) is located at residues 1-31; sequence MKLSRRSFMKANAVAAAAAAAGLSVPGVARA. Residues 39-95 form the 4Fe-4S Mo/W bis-MGD-type domain; sequence IKWDKAPCRFCGTGCGVLVGTQQGRVVACQGDPDAPVNRGLNCIKGYFLPKIMYGKD. Residues Cys46, Cys49, Cys53, and Cys81 each contribute to the [4Fe-4S] cluster site. Residues Lys83, Gln150, Asn175, Cys179, 212–219, 243–247, 262–264, Met372, Gln376, Asn482, 508–509, Lys531, Asp558, and 718–727 contribute to the Mo-bis(molybdopterin guanine dinucleotide) site; these read WGANMAEM, STYQH, QSD, SD, and TGRVLEHWHT. Position 794 (Phe794) interacts with substrate. 2 residues coordinate Mo-bis(molybdopterin guanine dinucleotide): Asn802 and Lys819.

The protein belongs to the prokaryotic molybdopterin-containing oxidoreductase family. NasA/NapA/NarB subfamily. Component of the periplasmic nitrate reductase NapAB complex composed of NapA and NapB. It depends on [4Fe-4S] cluster as a cofactor. The cofactor is Mo-bis(molybdopterin guanine dinucleotide). Post-translationally, predicted to be exported by the Tat system. The position of the signal peptide cleavage has not been experimentally proven.

The protein resides in the periplasm. The enzyme catalyses 2 Fe(II)-[cytochrome] + nitrate + 2 H(+) = 2 Fe(III)-[cytochrome] + nitrite + H2O. In terms of biological role, catalytic subunit of the periplasmic nitrate reductase complex NapAB. Receives electrons from NapB and catalyzes the reduction of nitrate to nitrite. The protein is Periplasmic nitrate reductase of Escherichia coli O8 (strain IAI1).